Consider the following 637-residue polypeptide: MAIEKLPPQLANQIAAGEVVERPASVIKELVENSLDAGATRVDIEIEKGGSKLIRIRDNGSGIPKADLCLALSRHATSKLKSLDDLEAILSFGFRGEALASISSVSRLILTSRTAEQAEAWQAHAEGTEMAVKVLPAAHPVGSTVEAVDLFFNTPARRRFLKSDKTEFTHIDEWLKRIALARRDIHFTLKHNGKTVRNYRPANTESQYIQRLALVCGKAFAETCLRIECQHNDLSLSGYLQSPSSANGYSETQYFYVNGRLVKDRLVNHAVRQAFAQYAEGVSPGYVLMLDLDPHQVDVNVHPAKHEVRFHQSRYVHDFILQALQSAISQSMELALNNEPEIQQSPDRQVSPTRGAVTAPLYSESIERKPSVSYDVRDSHSVTNQRDYSSGSSSYRSPLKPSARNGDVSLPSQSSIRAYGELLSTQSSSTHSDRVLSTQQNNYAVRSPAGNQNGLAASNSHAASMPAVIAGEFWVLVRDDKISLLSISMVARAVLKAEIAAKFSQGLVGQPLLMPVAVAVDDDWLAIIENREQLLRKLGIELSIRLGQLIIKKVPPYLRNSQLAVLIPELLQWIQLELPSDAAVVKWLAEQGANRFTSAGEAWFGLNALPDDVQRELYNLSQDLPWEQWMKENQSDR.

Polar residues predominate over residues 343-352; that stretch reads QQSPDRQVSP. A disordered region spans residues 343–411; the sequence is QQSPDRQVSP…SARNGDVSLP (69 aa). Residues 365-380 show a composition bias toward basic and acidic residues; sequence SIERKPSVSYDVRDSH. The segment covering 388–397 has biased composition (low complexity); sequence YSSGSSSYRS.

This sequence belongs to the DNA mismatch repair MutL/HexB family.

Functionally, this protein is involved in the repair of mismatches in DNA. It is required for dam-dependent methyl-directed DNA mismatch repair. May act as a 'molecular matchmaker', a protein that promotes the formation of a stable complex between two or more DNA-binding proteins in an ATP-dependent manner without itself being part of a final effector complex. The protein is DNA mismatch repair protein MutL of Shewanella halifaxensis (strain HAW-EB4).